A 291-amino-acid chain; its full sequence is Ribosomal large subunit pseudouridine synthase B (291 aa).

In terms of domain architecture, S4 RNA-binding spans 3–63 (EKLQKVLARA…GHLISVKESA (61 aa)). Aspartate 110 serves as the catalytic Nucleophile. The tract at residues 272 to 291 (VKRHSQIAGGRRSGGRNNNG) is disordered.

It belongs to the pseudouridine synthase RsuA family.

The enzyme catalyses uridine(2605) in 23S rRNA = pseudouridine(2605) in 23S rRNA. Responsible for synthesis of pseudouridine from uracil-2605 in 23S ribosomal RNA. In Salmonella typhi, this protein is Ribosomal large subunit pseudouridine synthase B (rluB).